The primary structure comprises 789 residues: Subtilisin-like protease Glyma18g48580 (789 aa).

The first 27 residues, 1 to 27 (MGSSIFCLHLILSSFFLFTFLLAAVNG), serve as a signal peptide directing secretion. An Inhibitor I9 domain is found at 32–116 (YIVYMGAHSH…VFLSKEHKLH (85 aa)). Residues 120–644 (SWEFLGLHRR…SGHVRPDLAI (525 aa)) enclose the Peptidase S8 domain. Residues Asp-150 and His-224 each act as charge relay system in the active site. The PA domain maps to 401–489 (TFRDAQLCRR…RPHGVKTTAI (89 aa)). The disordered stretch occupies residues 468 to 499 (STVNTPPRRAKSRPHGVKTTAIGDEDDPLKTG). Ser-576 serves as the catalytic Charge relay system.

The protein belongs to the peptidase S8 family. In terms of tissue distribution, expressed in roots, stems, flowers and young leaves. Barely detectable in matures leaves.

It localises to the secreted. Its function is as follows. Produces a rapid alkalinization of the cellular media and the induction of defense-related genes, including chitinase 1b, chalcone synthase and CYP93A1. The receptor for GmSubPep is probably different from the receptor(s) for GmPep890 and GmPep914. The chain is Subtilisin-like protease Glyma18g48580 from Glycine max (Soybean).